The primary structure comprises 226 residues: Phosphoglycolate phosphatase (226 aa).

Asp-10 functions as the Nucleophile in the catalytic mechanism. 3 residues coordinate Mg(2+): Asp-10, Asp-12, and Asp-175.

This sequence belongs to the HAD-like hydrolase superfamily. CbbY/CbbZ/Gph/YieH family. Requires Mg(2+) as cofactor.

It catalyses the reaction 2-phosphoglycolate + H2O = glycolate + phosphate. The protein operates within organic acid metabolism; glycolate biosynthesis; glycolate from 2-phosphoglycolate: step 1/1. In terms of biological role, specifically catalyzes the dephosphorylation of 2-phosphoglycolate. Is involved in the dissimilation of the intracellular 2-phosphoglycolate formed during the DNA repair of 3'-phosphoglycolate ends, a major class of DNA lesions induced by oxidative stress. The polypeptide is Phosphoglycolate phosphatase (Vibrio cholerae serotype O1 (strain ATCC 39315 / El Tor Inaba N16961)).